The following is a 266-amino-acid chain: 3-methyl-2-oxobutanoate hydroxymethyltransferase (266 aa).

Mg(2+) is bound by residues D45 and D84. 3-methyl-2-oxobutanoate-binding positions include 45 to 46 (DS), D84, and K113. E115 contributes to the Mg(2+) binding site. The active-site Proton acceptor is E183.

The protein belongs to the PanB family. In terms of assembly, homodecamer; pentamer of dimers. Mg(2+) is required as a cofactor.

It localises to the cytoplasm. It catalyses the reaction 3-methyl-2-oxobutanoate + (6R)-5,10-methylene-5,6,7,8-tetrahydrofolate + H2O = 2-dehydropantoate + (6S)-5,6,7,8-tetrahydrofolate. The protein operates within cofactor biosynthesis; (R)-pantothenate biosynthesis; (R)-pantoate from 3-methyl-2-oxobutanoate: step 1/2. Catalyzes the reversible reaction in which hydroxymethyl group from 5,10-methylenetetrahydrofolate is transferred onto alpha-ketoisovalerate to form ketopantoate. The polypeptide is 3-methyl-2-oxobutanoate hydroxymethyltransferase (Coxiella burnetii (strain CbuG_Q212) (Coxiella burnetii (strain Q212))).